We begin with the raw amino-acid sequence, 859 residues long: Probable helicase A859L (859 aa).

Residues 178–349 (YQELRRSGRA…KNRELFGGVA (172 aa)) form the Helicase ATP-binding domain. 191 to 198 (MACRCGKT) serves as a coordination point for ATP. Residues 298-301 (DECH) carry the DEAH box motif. One can recognise a Helicase C-terminal domain in the interval 394 to 553 (QIIMALAYLK…RFYEHLLNPS (160 aa)).

Belongs to the asfivirus helicase A859L family.

In Ornithodoros (relapsing fever ticks), this protein is Probable helicase A859L.